The following is a 278-amino-acid chain: Bifunctional protein FolD (278 aa).

Residues 162 to 164 (GAG) and Ile228 each bind NADP(+).

It belongs to the tetrahydrofolate dehydrogenase/cyclohydrolase family. Homodimer.

The enzyme catalyses (6R)-5,10-methylene-5,6,7,8-tetrahydrofolate + NADP(+) = (6R)-5,10-methenyltetrahydrofolate + NADPH. The catalysed reaction is (6R)-5,10-methenyltetrahydrofolate + H2O = (6R)-10-formyltetrahydrofolate + H(+). It functions in the pathway one-carbon metabolism; tetrahydrofolate interconversion. Catalyzes the oxidation of 5,10-methylenetetrahydrofolate to 5,10-methenyltetrahydrofolate and then the hydrolysis of 5,10-methenyltetrahydrofolate to 10-formyltetrahydrofolate. This chain is Bifunctional protein FolD, found in Hydrogenobaculum sp. (strain Y04AAS1).